Here is a 142-residue protein sequence, read N- to C-terminus: Large ribosomal subunit protein uL11 (142 aa).

The protein belongs to the universal ribosomal protein uL11 family. Part of the ribosomal stalk of the 50S ribosomal subunit. Interacts with L10 and the large rRNA to form the base of the stalk. L10 forms an elongated spine to which L12 dimers bind in a sequential fashion forming a multimeric L10(L12)X complex. In terms of processing, one or more lysine residues are methylated.

Functionally, forms part of the ribosomal stalk which helps the ribosome interact with GTP-bound translation factors. The polypeptide is Large ribosomal subunit protein uL11 (Desulforudis audaxviator (strain MP104C)).